A 549-amino-acid chain; its full sequence is MAFNDLLLQLGGVGRFQKIQVTLVILPLILLASHNTLQNFTAAIPTHHCRPPADTNLSEDGDLEAWLPRDGQGRPESCLLFTSPQRGPPFPNGTETNGTGATEPCPHGWIYDNSTFPSTIVTEWDLVCSHRALRQLAQSLYMMGVLLGAMTFGCLADRLGRRKVLIFNYLQTAVSGTCAAFAPNFPAYCAFRFLSGMSTAGVVLNCMTLNVEWMPIHTRAYVGTLTGYVYSLGQFLLAGMAYAVPHWRYLQLLVSAPFFAFFIYSWFFIESARWYASSGRLDLTLRNLQRVAWINGKQEEGANLSMEALQASLKKELTTGKSQASALELIRCPALRRLFLCLSMLWFATSFAYYGLVMDLQGFGVSIYLIQVIFGAVDLPAKLVSFLVINNVGRRPAQMASLLLAGICILINGVVPKDKSIVRTSLAVLGKGCLASSFNCIFLYTGEVYPTMIRQTGLGMGSTLARVGSIVSPLVSMTAELYPSVPLFIYGAVPVAASAAIALLPETLGQPLPDTVQDVENRRRGKTRKQQEELQKQMVPLQASAQVKN.

Over 1 to 23 (MAFNDLLLQLGGVGRFQKIQVTL) the chain is Cytoplasmic. A helical membrane pass occupies residues 24-44 (VILPLILLASHNTLQNFTAAI). The Extracellular portion of the chain corresponds to 45–135 (PTHHCRPPAD…LVCSHRALRQ (91 aa)). N-linked (GlcNAc...) asparagine glycosylation is found at Asn56, Asn92, and Asn113. The helical transmembrane segment at 136–156 (LAQSLYMMGVLLGAMTFGCLA) threads the bilayer. At 157–164 (DRLGRRKV) the chain is on the cytoplasmic side. A helical transmembrane segment spans residues 165–185 (LIFNYLQTAVSGTCAAFAPNF). Over 186 to 195 (PAYCAFRFLS) the chain is Extracellular. Residues 196 to 216 (GMSTAGVVLNCMTLNVEWMPI) traverse the membrane as a helical segment. Residues 217–224 (HTRAYVGT) are Cytoplasmic-facing. A helical transmembrane segment spans residues 225 to 245 (LTGYVYSLGQFLLAGMAYAVP). The Extracellular segment spans residues 246 to 248 (HWR). The helical transmembrane segment at 249–269 (YLQLLVSAPFFAFFIYSWFFI) threads the bilayer. Residues 270–337 (ESARWYASSG…ELIRCPALRR (68 aa)) are Cytoplasmic-facing. Residues 338 to 358 (LFLCLSMLWFATSFAYYGLVM) form a helical membrane-spanning segment. At 359–368 (DLQGFGVSIY) the chain is on the extracellular side. A helical transmembrane segment spans residues 369–389 (LIQVIFGAVDLPAKLVSFLVI). Over 390 to 395 (NNVGRR) the chain is Cytoplasmic. The chain crosses the membrane as a helical span at residues 396–416 (PAQMASLLLAGICILINGVVP). The Extracellular segment spans residues 417 to 425 (KDKSIVRTS). The helical transmembrane segment at 426–446 (LAVLGKGCLASSFNCIFLYTG) threads the bilayer. Residues 447 to 456 (EVYPTMIRQT) are Cytoplasmic-facing. Residues 457 to 477 (GLGMGSTLARVGSIVSPLVSM) traverse the membrane as a helical segment. The Extracellular segment spans residues 478–484 (TAELYPS). The helical transmembrane segment at 485–505 (VPLFIYGAVPVAASAAIALLP) threads the bilayer. Over 506–549 (ETLGQPLPDTVQDVENRRRGKTRKQQEELQKQMVPLQASAQVKN) the chain is Cytoplasmic. Residues 521 to 549 (NRRRGKTRKQQEELQKQMVPLQASAQVKN) are disordered.

This sequence belongs to the major facilitator (TC 2.A.1) superfamily. Organic cation transporter (TC 2.A.1.19) family. Post-translationally, glycosylated. Glycosylation is necessary for proper targeting of the transporter to the plasma membrane.

The protein localises to the basolateral cell membrane. It is found in the basal cell membrane. The enzyme catalyses (6R)-L-erythro-5,6,7,8-tetrahydrobiopterin(out) + a dicarboxylate(in) = (6R)-L-erythro-5,6,7,8-tetrahydrobiopterin(in) + a dicarboxylate(out). It carries out the reaction L-erythro-7,8-dihydrobiopterin(out) + a dicarboxylate(in) = L-erythro-7,8-dihydrobiopterin(in) + a dicarboxylate(out). It catalyses the reaction L-sepiapterin(out) + a dicarboxylate(in) = L-sepiapterin(in) + a dicarboxylate(out). The catalysed reaction is prostaglandin F2alpha(out) + a dicarboxylate(in) = prostaglandin F2alpha(in) + a dicarboxylate(out). The enzyme catalyses prostaglandin E2(out) + a dicarboxylate(in) = prostaglandin E2(in) + a dicarboxylate(out). It carries out the reaction 3',5'-cyclic AMP(out) + a dicarboxylate(in) = 3',5'-cyclic AMP(in) + a dicarboxylate(out). It catalyses the reaction 3',5'-cyclic GMP(out) + a dicarboxylate(in) = 3',5'-cyclic GMP(in) + a dicarboxylate(out). The catalysed reaction is urate(out) + a dicarboxylate(in) = urate(in) + a dicarboxylate(out). The enzyme catalyses kynurenate(out) + glutarate(in) = kynurenate(in) + glutarate(out). It carries out the reaction (indol-3-yl)acetate(out) + a dicarboxylate(in) = (indol-3-yl)acetate(in) + a dicarboxylate(out). It catalyses the reaction indoxyl sulfate(out) + a dicarboxylate(in) = indoxyl sulfate(in) + a dicarboxylate(out). The catalysed reaction is N-benzoylglycine(out) + a dicarboxylate(in) = N-benzoylglycine(in) + a dicarboxylate(out). The enzyme catalyses 3-carboxy-4-methyl-5-propyl-2-furanpropanoate(out) + a dicarboxylate(in) = 3-carboxy-4-methyl-5-propyl-2-furanpropanoate(in) + a dicarboxylate(out). Its function is as follows. Secondary active transporter that functions as a Na(+)-independent organic anion (OA)/dicarboxylate antiporter where the uptake of one molecule of OA into the cell is coupled with an efflux of one molecule of intracellular dicarboxylate such as 2-oxoglutarate or glutarate. Mediates the uptake of OA across the basolateral side of proximal tubule epithelial cells, thereby contributing to the renal elimination of endogenous OA from the systemic circulation into the urine. Functions as a biopterin transporters involved in the uptake and the secretion of coenzymes tetrahydrobiopterin (BH4), dihydrobiopterin (BH2) and sepiapterin to urine, thereby determining baseline levels of blood biopterins. Transports prostaglandin E2 (PGE2) and prostaglandin F2-alpha (PGF2-alpha) and may contribute to their renal excretion. Also mediates the uptake of cyclic nucleotides such as cAMP and cGMP. Involved in the transport of neuroactive tryptophan metabolites kynurenate (KYNA) and xanthurenate (XA) and may contribute to their secretion from the brain. May transport glutamate. Also involved in the disposition of uremic toxins and potentially toxic xenobiotics by the renal organic anion secretory pathway, helping reduce their undesired toxicological effects on the body. Uremic toxins include the indoxyl sulfate (IS), hippurate/N-benzoylglycine (HA), indole acetate (IA), 3-carboxy-4- methyl-5-propyl-2-furanpropionate (CMPF) and urate. Xenobiotics include the mycotoxin ochratoxin (OTA). May also contribute to the transport of organic compounds in testes across the blood-testis-barrier. This Bos taurus (Bovine) protein is Solute carrier family 22 member 6.